Reading from the N-terminus, the 137-residue chain is Putative pre-16S rRNA nuclease (137 aa).

It belongs to the YqgF nuclease family.

Its subcellular location is the cytoplasm. Its function is as follows. Could be a nuclease involved in processing of the 5'-end of pre-16S rRNA. This Bacillus cytotoxicus (strain DSM 22905 / CIP 110041 / 391-98 / NVH 391-98) protein is Putative pre-16S rRNA nuclease.